Here is a 297-residue protein sequence, read N- to C-terminus: Probable endonuclease 4 (297 aa).

His-68, His-109, Glu-144, Asp-178, His-181, His-213, Asp-226, His-228, and Glu-258 together coordinate Zn(2+).

The protein belongs to the AP endonuclease 2 family. Zn(2+) is required as a cofactor.

The enzyme catalyses Endonucleolytic cleavage to 5'-phosphooligonucleotide end-products.. Its function is as follows. Endonuclease IV plays a role in DNA repair. It cleaves phosphodiester bonds at apurinic or apyrimidinic (AP) sites, generating a 3'-hydroxyl group and a 5'-terminal sugar phosphate. The sequence is that of Probable endonuclease 4 from Lysinibacillus sphaericus (strain C3-41).